Here is a 300-residue protein sequence, read N- to C-terminus: Merozoite surface protein 2 (300 aa).

An N-terminal signal peptide occupies residues 1-20 (MKVIKTLSIINFFIFVTFNI). Asparagine 22 and asparagine 36 each carry an N-linked (GlcNAc...) asparagine glycan. The polymorphic region stretch occupies residues 44 to 226 (EESKPPTGAV…EQTESPELQS (183 aa)). A 1; inverted repeat occupies 51–58 (GAVAGSGA). Positions 51 to 110 (GAVAGSGAGAGSGAGAVAGSGAGAVAGSGAGAVAGSGAGAVAGSGAGAVAGSGAVAGSGA) are 7 X 8 AA tandem repeats of G-S-G-A-G-A-V-A. Tandem repeats lie at residues 61–68 (GSGAGAVA), 69–76 (GSGAGAVA), 77–84 (GSGAGAVA), 85–92 (GSGAGAVA), and 93–100 (GSGAGAVA). Residues 103 to 110 (GAVAGSGA) form a 7; inverted repeat. Positions 111-261 (GNGANPGADA…DSQKECTDGN (151 aa)) are disordered. Residues 123-148 (SPSTPATTTTTTTTNDAEASTSTSSE) are compositionally biased toward low complexity. Over residues 149–165 (NRNHNNAETNPKGKGEV) the composition is skewed to basic and acidic residues. Polar residues-rich tracts occupy residues 167-193 (KPNQANKETQNNSNVQQDSQTKSNVPR) and 200-228 (KSPTAQPEQAENSAPTAEQTESPELQSAP). The N-linked (GlcNAc...) asparagine glycan is linked to asparagine 177. Asparagine 249 carries an N-linked (GlcNAc...) asparagine glycan. An intrachain disulfide couples cysteine 257 to cysteine 265. 2 N-linked (GlcNAc...) asparagine glycosylation sites follow: asparagine 273 and asparagine 274. Asparagine 274 carries GPI-anchor amidated asparagine lipidation. A propeptide spans 275-300 (SSNIASINKFVVLISATLVLSFAIFI) (removed in mature form).

Its subcellular location is the cell membrane. May play a role in the merozoite attachment to the erythrocyte. In Plasmodium falciparum (isolate imr143), this protein is Merozoite surface protein 2.